The sequence spans 161 residues: Phosphopantetheine adenylyltransferase (161 aa).

Ser9 contributes to the substrate binding site. Residues 9–10 (SF) and His17 contribute to the ATP site. Substrate is bound by residues Lys41, Thr73, and Arg87. Residues 88–90 (GLR), Glu98, and 123–129 (YSFISST) each bind ATP.

This sequence belongs to the bacterial CoaD family. As to quaternary structure, homohexamer. It depends on Mg(2+) as a cofactor.

The protein localises to the cytoplasm. It carries out the reaction (R)-4'-phosphopantetheine + ATP + H(+) = 3'-dephospho-CoA + diphosphate. It participates in cofactor biosynthesis; coenzyme A biosynthesis; CoA from (R)-pantothenate: step 4/5. Functionally, reversibly transfers an adenylyl group from ATP to 4'-phosphopantetheine, yielding dephospho-CoA (dPCoA) and pyrophosphate. The sequence is that of Phosphopantetheine adenylyltransferase from Desulforamulus reducens (strain ATCC BAA-1160 / DSM 100696 / MI-1) (Desulfotomaculum reducens).